A 289-amino-acid polypeptide reads, in one-letter code: Pteridine reductase 1 (289 aa).

14-41 serves as a coordination point for NADP(+); it reads GAAKRLGSSIAEALHAEGYTVCLHYHRS. Ser176 contributes to the substrate binding site. Residue Tyr195 is the Proton acceptor of the active site. Position 195–199 (195–199) interacts with NADP(+); the sequence is YTMAK.

It belongs to the short-chain dehydrogenases/reductases (SDR) family. In terms of assembly, homotetramer.

The enzyme catalyses (6R)-L-erythro-5,6,7,8-tetrahydrobiopterin + 2 NADP(+) = L-erythro-biopterin + 2 NADPH + 2 H(+). It functions in the pathway cofactor biosynthesis; tetrahydrobiopterin biosynthesis; tetrahydrobiopterin from biopterin: step 1/1. Its function is as follows. Exhibits a NADPH-dependent biopterin reductase activity. Has good activity with folate and significant activity with dihydrofolate and dihydrobiopterin, but not with quinonoid dihydrobiopterin. Confers resistance to methotrexate (MTX). In Leishmania tarentolae (Sauroleishmania tarentolae), this protein is Pteridine reductase 1 (PTR1).